We begin with the raw amino-acid sequence, 359 residues long: Homoserine dehydrogenase (359 aa).

4 residues coordinate NAD(+): Ala-13, Val-15, Val-16, and Ala-41. Val-16 is an NADP(+) binding site. Val-16 lines the NADPH pocket. NADPH is bound by residues Lys-60, Thr-93, Ser-94, and Lys-117. NAD(+) is bound at residue Thr-93. Residue Thr-93 participates in NADP(+) binding. Lys-117 is a binding site for NADP(+). Na(+) contacts are provided by Glu-143, Val-146, Ala-148, and Leu-150. NADP(+) contacts are provided by Gly-205 and Glu-208. Residues Glu-208 and Asp-219 each coordinate L-homoserine. Lys-223 functions as the Proton donor in the catalytic mechanism. A Glycyl lysine isopeptide (Lys-Gly) (interchain with G-Cter in ubiquitin) cross-link involves residue Lys-290. Residue Gly-340 coordinates NAD(+). Gly-340 contributes to the NADP(+) binding site. Residue Gly-340 participates in NADPH binding.

This sequence belongs to the homoserine dehydrogenase family. As to quaternary structure, homodimer. A metal cation is required as a cofactor.

It catalyses the reaction L-homoserine + NADP(+) = L-aspartate 4-semialdehyde + NADPH + H(+). The catalysed reaction is L-homoserine + NAD(+) = L-aspartate 4-semialdehyde + NADH + H(+). The protein operates within amino-acid biosynthesis; L-methionine biosynthesis via de novo pathway; L-homoserine from L-aspartate: step 3/3. It participates in amino-acid biosynthesis; L-threonine biosynthesis; L-threonine from L-aspartate: step 3/5. Its function is as follows. Catalyzes the conversion of L-aspartate-beta-semialdehyde (L-Asa) to L-homoserine (L-Hse), the third step in the biosynthesis of amino acids that derive from aspartate (the aspartate family of amino acids), including methioinine and threonine, the latter of which is a precursor to isoleucine; production of homoserine leads to a branch-point in the pathway as it can either be O-phosphorylated for processing to threonine, or O-acylated for processing to methionine. In Saccharomyces cerevisiae (strain ATCC 204508 / S288c) (Baker's yeast), this protein is Homoserine dehydrogenase (HOM6).